Here is a 671-residue protein sequence, read N- to C-terminus: DNA ligase (671 aa).

Residues 32-36, 81-82, and E113 contribute to the NAD(+) site; these read DAEYD and SL. The N6-AMP-lysine intermediate role is filled by K115. NAD(+) contacts are provided by R136, E173, K290, and K314. 4 residues coordinate Zn(2+): C408, C411, C426, and C432. A BRCT domain is found at 593–671; the sequence is EIDSPFAGKT…EAEMIRLLGA (79 aa).

Belongs to the NAD-dependent DNA ligase family. LigA subfamily. The cofactor is Mg(2+). Requires Mn(2+) as cofactor.

The catalysed reaction is NAD(+) + (deoxyribonucleotide)n-3'-hydroxyl + 5'-phospho-(deoxyribonucleotide)m = (deoxyribonucleotide)n+m + AMP + beta-nicotinamide D-nucleotide.. Functionally, DNA ligase that catalyzes the formation of phosphodiester linkages between 5'-phosphoryl and 3'-hydroxyl groups in double-stranded DNA using NAD as a coenzyme and as the energy source for the reaction. It is essential for DNA replication and repair of damaged DNA. This chain is DNA ligase, found in Salmonella paratyphi C (strain RKS4594).